The chain runs to 406 residues: MAAGAGARPAPRWLKALTEPLSAAQLRRLEEHRYTAAGVSLLEPPLQLYWTWLLQWIPLWMAPNSITLLGLAINMLTTLVLISYCPTVTEEAPYWTYLLCALGLFIYQSLDAIDGKQARRTNSCSPLGELFDHGCDSLSTVFMAVGASIAVRLGTHPDWLFFCSFIGMFMFYCAHWQTYVSGVLRFGKVDVTEIQIALVIVFVLSTFGGATMWDYTIPILEIKLKILPVLGVVGGAIFSCSNYFHVILHGGVGKNGSTIAGTSVLSPGLHIGIIIILAIMIYKKSATNLFEKHPCLYTLMFGCVFAKVSQKLVIAHMTKSELYLQDTVFIGPGLLFLDQYFNNFVDEYIVLWIAMVISSLDMMRYFSALCLQISRHLHLSIFKTSCHQAPEQVQVLPPKSHQNNMD.

The residue at position 2 (A2) is an N-acetylalanine. Residues 2–62 (AAGAGARPAP…LLQWIPLWMA (61 aa)) are Cytoplasmic-facing. The helical transmembrane segment at 63–83 (PNSITLLGLAINMLTTLVLIS) threads the bilayer. CDP-choline is bound at residue N64. At 84–93 (YCPTVTEEAP) the chain is on the lumenal side. The chain crosses the membrane as a helical span at residues 94 to 118 (YWTYLLCALGLFIYQSLDAIDGKQA). Residues D111 and D114 each contribute to the Mg(2+) site. Position 119 (R119) interacts with CDP-choline. Topologically, residues 119-125 (RRTNSCS) are cytoplasmic. A helical membrane pass occupies residues 126-150 (PLGELFDHGCDSLSTVFMAVGASIA). Residue D132 participates in Mg(2+) binding. H133 acts as the Proton acceptor in catalysis. Residue D136 participates in Mg(2+) binding. The Lumenal segment spans residues 151 to 160 (VRLGTHPDWL). A helical transmembrane segment spans residues 161–179 (FFCSFIGMFMFYCAHWQTY). The Cytoplasmic portion of the chain corresponds to 180–190 (VSGVLRFGKVD). The chain crosses the membrane as a helical span at residues 191-207 (VTEIQIALVIVFVLSTF). The Lumenal portion of the chain corresponds to 208-222 (GGATMWDYTIPILEI). Residues 223-248 (KLKILPVLGVVGGAIFSCSNYFHVIL) form a helical membrane-spanning segment. The Cytoplasmic portion of the chain corresponds to 249–265 (HGGVGKNGSTIAGTSVL). Residues 266–281 (SPGLHIGIIIILAIMI) traverse the membrane as a helical segment. Residues 282 to 293 (YKKSATNLFEKH) lie on the Lumenal side of the membrane. A helical transmembrane segment spans residues 294–316 (PCLYTLMFGCVFAKVSQKLVIAH). At 317-329 (MTKSELYLQDTVF) the chain is on the cytoplasmic side. A helical transmembrane segment spans residues 330 to 339 (IGPGLLFLDQ). The Lumenal portion of the chain corresponds to 340–346 (YFNNFVD). Residues 347–376 (EYIVLWIAMVISSLDMMRYFSALCLQISRH) form a helical membrane-spanning segment. Residues 377 to 406 (LHLSIFKTSCHQAPEQVQVLPPKSHQNNMD) are Cytoplasmic-facing.

It belongs to the CDP-alcohol phosphatidyltransferase class-I family. It depends on Mg(2+) as a cofactor. Mn(2+) is required as a cofactor.

It localises to the golgi apparatus membrane. The enzyme catalyses CDP-choline + a 1,2-diacyl-sn-glycerol = a 1,2-diacyl-sn-glycero-3-phosphocholine + CMP + H(+). It carries out the reaction 1-octadecanoyl-2-(5Z,8Z,11Z,14Z-eicosatetraenoyl)-sn-glycerol + CDP-choline = 1-octadecanoyl-2-(5Z,8Z,11Z,14Z-eicosatetraenoyl)-sn-glycero-3-phosphocholine + CMP + H(+). The catalysed reaction is 1-hexadecanoyl-2-(9Z-octadecenoyl)-sn-glycerol + CDP-choline = 1-hexadecanoyl-2-(9Z-octadecenoyl)-sn-glycero-3-phosphocholine + CMP + H(+). It catalyses the reaction 1-hexadecanoyl-2-(4Z,7Z,10Z,13Z,16Z,19Z-docosahexaenoyl)-sn-glycerol + CDP-choline = 1-hexadecanoyl-2-(4Z,7Z,10Z,13Z,16Z,19Z-docosahexaenoyl)-sn-glycero-3-phosphocholine + CMP + H(+). The enzyme catalyses 1,2-dioctanoyl-sn-glycerol + CDP-choline = 1,2-dioctanoyl-sn-glycero-3-phosphocholine + CMP + H(+). Its pathway is phospholipid metabolism; phosphatidylcholine biosynthesis; phosphatidylcholine from phosphocholine: step 2/2. Its function is as follows. Catalyzes the final step of de novo phosphatidylcholine (PC) synthesis, i.e. the transfer of choline phosphate from CDP-choline to the free hydroxyl of a diacylglycerol (DAG), producing a PC. It thereby plays a central role in the formation and maintenance of vesicular membranes. The sequence is that of Cholinephosphotransferase 1 (CHPT1) from Bos taurus (Bovine).